Reading from the N-terminus, the 144-residue chain is Large ribosomal subunit protein uL16 (144 aa).

It belongs to the universal ribosomal protein uL16 family. As to quaternary structure, part of the 50S ribosomal subunit.

In terms of biological role, binds 23S rRNA and is also seen to make contacts with the A and possibly P site tRNAs. The polypeptide is Large ribosomal subunit protein uL16 (Erythrobacter litoralis (strain HTCC2594)).